The following is a 287-amino-acid chain: ATP synthase gamma chain (287 aa).

It belongs to the ATPase gamma chain family. In terms of assembly, F-type ATPases have 2 components, CF(1) - the catalytic core - and CF(0) - the membrane proton channel. CF(1) has five subunits: alpha(3), beta(3), gamma(1), delta(1), epsilon(1). CF(0) has three main subunits: a, b and c.

It is found in the cell inner membrane. Its function is as follows. Produces ATP from ADP in the presence of a proton gradient across the membrane. The gamma chain is believed to be important in regulating ATPase activity and the flow of protons through the CF(0) complex. This Escherichia fergusonii (strain ATCC 35469 / DSM 13698 / CCUG 18766 / IAM 14443 / JCM 21226 / LMG 7866 / NBRC 102419 / NCTC 12128 / CDC 0568-73) protein is ATP synthase gamma chain.